Consider the following 425-residue polypeptide: Histidine--tRNA ligase (425 aa).

It belongs to the class-II aminoacyl-tRNA synthetase family. In terms of assembly, homodimer.

It is found in the cytoplasm. The enzyme catalyses tRNA(His) + L-histidine + ATP = L-histidyl-tRNA(His) + AMP + diphosphate + H(+). This Aeromonas salmonicida (strain A449) protein is Histidine--tRNA ligase.